We begin with the raw amino-acid sequence, 303 residues long: Propanal dehydrogenase (CoA-propanoylating) (303 aa).

12 to 15 (SGNI) contacts NAD(+). Residue Cys127 is the Acyl-thioester intermediate of the active site. Residues 158-166 (SAGPGTRAN) and Asn277 each bind NAD(+).

The protein belongs to the acetaldehyde dehydrogenase family. As to quaternary structure, monomer. Forms a heterotetramer composed of two aldolase (HsaF) and two dehydrogenase (HsaG) subunits.

The enzyme catalyses propanal + NAD(+) + CoA = propanoyl-CoA + NADH + H(+). It catalyses the reaction acetaldehyde + NAD(+) + CoA = acetyl-CoA + NADH + H(+). Functionally, involved in cholesterol degradation. Catalyzes the conversion of propanal to propanoyl-CoA, using NAD(+) and coenzyme A. The polypeptide is Propanal dehydrogenase (CoA-propanoylating) (Mycobacterium bovis (strain ATCC BAA-935 / AF2122/97)).